The sequence spans 169 residues: uncharacterized protein (169 aa).

The N-terminal 91 residues, 1–91, are a transit peptide targeting the mitochondrion; the sequence is MFSSTFRRLA…NKEQYTVRCL (91 aa). Residues 54 to 76 form a disordered region; that stretch reads PQPKSPGSLPSSTRTAPNPNGEE. Residues 61-71 are compositionally biased toward polar residues; it reads SLPSSTRTAPN.

It localises to the mitochondrion. This is an uncharacterized protein from Trypanosoma brucei brucei (strain 927/4 GUTat10.1).